The primary structure comprises 202 residues: Alpha-1-acid glycoprotein (202 aa).

The first 18 residues, 1 to 18, serve as a signal peptide directing secretion; the sequence is MALLWALAVLSHLPLLDA. Asn34, Asn57, Asn94, Asn104, and Asn136 each carry an N-linked (GlcNAc...) asparagine glycan. A disulfide bridge connects residues Cys91 and Cys184.

The protein belongs to the calycin superfamily. Lipocalin family.

The protein resides in the secreted. In terms of biological role, functions as a transport protein in the blood stream. Binds various ligands in the interior of its beta-barrel domain. Appears to function in modulating the activity of the immune system during the acute-phase reaction. This is Alpha-1-acid glycoprotein (ORM1) from Bos taurus (Bovine).